The chain runs to 187 residues: Peptidyl-tRNA hydrolase (187 aa).

Tyrosine 14 is a tRNA binding site. Histidine 19 (proton acceptor) is an active-site residue. Positions 64, 66, and 112 each coordinate tRNA.

It belongs to the PTH family. As to quaternary structure, monomer.

It is found in the cytoplasm. The catalysed reaction is an N-acyl-L-alpha-aminoacyl-tRNA + H2O = an N-acyl-L-amino acid + a tRNA + H(+). Functionally, hydrolyzes ribosome-free peptidyl-tRNAs (with 1 or more amino acids incorporated), which drop off the ribosome during protein synthesis, or as a result of ribosome stalling. Catalyzes the release of premature peptidyl moieties from peptidyl-tRNA molecules trapped in stalled 50S ribosomal subunits, and thus maintains levels of free tRNAs and 50S ribosomes. This chain is Peptidyl-tRNA hydrolase, found in Bdellovibrio bacteriovorus (strain ATCC 15356 / DSM 50701 / NCIMB 9529 / HD100).